The following is a 155-amino-acid chain: Small ribosomal subunit protein uS7c (155 aa).

The protein belongs to the universal ribosomal protein uS7 family. Part of the 30S ribosomal subunit.

It is found in the plastid. Its subcellular location is the chloroplast. Functionally, one of the primary rRNA binding proteins, it binds directly to 16S rRNA where it nucleates assembly of the head domain of the 30S subunit. This Allium textile (Textile onion) protein is Small ribosomal subunit protein uS7c (rps7).